An 804-amino-acid chain; its full sequence is Leucine--tRNA ligase (804 aa).

Positions 39-50 (PFPSGKGLHVGH) match the 'HIGH' region motif. Residues 573–577 (KMSKS) carry the 'KMSKS' region motif. Lys576 serves as a coordination point for ATP.

It belongs to the class-I aminoacyl-tRNA synthetase family.

It is found in the cytoplasm. It catalyses the reaction tRNA(Leu) + L-leucine + ATP = L-leucyl-tRNA(Leu) + AMP + diphosphate. This chain is Leucine--tRNA ligase, found in Lactobacillus gasseri (strain ATCC 33323 / DSM 20243 / BCRC 14619 / CIP 102991 / JCM 1131 / KCTC 3163 / NCIMB 11718 / NCTC 13722 / AM63).